The primary structure comprises 469 residues: Adenosylhomocysteinase (469 aa).

3 residues coordinate substrate: T58, D133, and E195. 196 to 198 (TTT) is a binding site for NAD(+). 2 residues coordinate substrate: K225 and D229. NAD(+)-binding positions include N230, 259 to 264 (GFGDVG), E282, N317, 338 to 340 (IGH), and N383.

It belongs to the adenosylhomocysteinase family. NAD(+) serves as cofactor.

The protein resides in the cytoplasm. The catalysed reaction is S-adenosyl-L-homocysteine + H2O = L-homocysteine + adenosine. Its pathway is amino-acid biosynthesis; L-homocysteine biosynthesis; L-homocysteine from S-adenosyl-L-homocysteine: step 1/1. May play a key role in the regulation of the intracellular concentration of adenosylhomocysteine. The sequence is that of Adenosylhomocysteinase from Rhodopseudomonas palustris (strain ATCC BAA-98 / CGA009).